Here is a 239-residue protein sequence, read N- to C-terminus: Sugar fermentation stimulation protein homolog (239 aa).

The protein belongs to the SfsA family.

The polypeptide is Sugar fermentation stimulation protein homolog (Shewanella woodyi (strain ATCC 51908 / MS32)).